Consider the following 303-residue polypeptide: N-acetylmuramic acid 6-phosphate etherase (303 aa).

The region spanning 61 to 224 (IVQAFQQGGR…TTASMILLGK (164 aa)) is the SIS domain. The Proton donor role is filled by E89. The active site involves E120.

It belongs to the GCKR-like family. MurNAc-6-P etherase subfamily. In terms of assembly, homodimer.

It carries out the reaction N-acetyl-D-muramate 6-phosphate + H2O = N-acetyl-D-glucosamine 6-phosphate + (R)-lactate. The protein operates within amino-sugar metabolism; 1,6-anhydro-N-acetylmuramate degradation. It functions in the pathway amino-sugar metabolism; N-acetylmuramate degradation. Its pathway is cell wall biogenesis; peptidoglycan recycling. In terms of biological role, specifically catalyzes the cleavage of the D-lactyl ether substituent of MurNAc 6-phosphate, producing GlcNAc 6-phosphate and D-lactate. Together with AnmK, is also required for the utilization of anhydro-N-acetylmuramic acid (anhMurNAc) either imported from the medium or derived from its own cell wall murein, and thus plays a role in cell wall recycling. The polypeptide is N-acetylmuramic acid 6-phosphate etherase (murQ) (Haemophilus influenzae (strain ATCC 51907 / DSM 11121 / KW20 / Rd)).